A 48-amino-acid chain; its full sequence is Photosystem II reaction center protein K (48 aa).

Residues 1 to 11 constitute a propeptide that is removed on maturation; sequence MFLFNLEQSIG. Residues 23-43 traverse the membrane as a helical segment; sequence LVDVLPIIPLLFLLLAFVWQA.

This sequence belongs to the PsbK family. In terms of assembly, PSII is composed of 1 copy each of membrane proteins PsbA, PsbB, PsbC, PsbD, PsbE, PsbF, PsbH, PsbI, PsbJ, PsbK, PsbL, PsbM, PsbT, PsbX, PsbY, PsbZ, Psb30/Ycf12, at least 3 peripheral proteins of the oxygen-evolving complex and a large number of cofactors. It forms dimeric complexes.

It is found in the plastid. The protein resides in the chloroplast thylakoid membrane. One of the components of the core complex of photosystem II (PSII). PSII is a light-driven water:plastoquinone oxidoreductase that uses light energy to abstract electrons from H(2)O, generating O(2) and a proton gradient subsequently used for ATP formation. It consists of a core antenna complex that captures photons, and an electron transfer chain that converts photonic excitation into a charge separation. In Lepocinclis buetschlii, this protein is Photosystem II reaction center protein K.